Consider the following 228-residue polypeptide: MAWSTLVDPSPSVLTNPIPFPSGRGIVYVITDRRAAGERSLIDIVHAALRGGANAIQLRDKDVPARAMIALGEALLPLTRAAGVPLIVNDRVDVALALDADGVHVGQDDIPADMVRRIIGPARILGVSVATVEQAQQAARDGATYVSVGDLFGTPSKPDAGPPIGLTPLTEIARAVDLPVLGIGGITVANAASVVRAGAVGVAVISAVIGAPDPEAATRALCDVAAQR.

4-amino-2-methyl-5-(diphosphooxymethyl)pyrimidine contacts are provided by residues 57-61 (QLRDK) and Asn89. The Mg(2+) site is built by Asp90 and Asp109. Ser128 serves as a coordination point for 4-amino-2-methyl-5-(diphosphooxymethyl)pyrimidine. 2-[(2R,5Z)-2-carboxy-4-methylthiazol-5(2H)-ylidene]ethyl phosphate is bound at residue 154 to 156 (TPS). Position 157 (Lys157) interacts with 4-amino-2-methyl-5-(diphosphooxymethyl)pyrimidine. 2-[(2R,5Z)-2-carboxy-4-methylthiazol-5(2H)-ylidene]ethyl phosphate-binding positions include Gly185 and 205–206 (IS).

The protein belongs to the thiamine-phosphate synthase family. Requires Mg(2+) as cofactor.

The catalysed reaction is 2-[(2R,5Z)-2-carboxy-4-methylthiazol-5(2H)-ylidene]ethyl phosphate + 4-amino-2-methyl-5-(diphosphooxymethyl)pyrimidine + 2 H(+) = thiamine phosphate + CO2 + diphosphate. It catalyses the reaction 2-(2-carboxy-4-methylthiazol-5-yl)ethyl phosphate + 4-amino-2-methyl-5-(diphosphooxymethyl)pyrimidine + 2 H(+) = thiamine phosphate + CO2 + diphosphate. The enzyme catalyses 4-methyl-5-(2-phosphooxyethyl)-thiazole + 4-amino-2-methyl-5-(diphosphooxymethyl)pyrimidine + H(+) = thiamine phosphate + diphosphate. It participates in cofactor biosynthesis; thiamine diphosphate biosynthesis; thiamine phosphate from 4-amino-2-methyl-5-diphosphomethylpyrimidine and 4-methyl-5-(2-phosphoethyl)-thiazole: step 1/1. In terms of biological role, condenses 4-methyl-5-(beta-hydroxyethyl)thiazole monophosphate (THZ-P) and 2-methyl-4-amino-5-hydroxymethyl pyrimidine pyrophosphate (HMP-PP) to form thiamine monophosphate (TMP). The protein is Thiamine-phosphate synthase of Roseiflexus castenholzii (strain DSM 13941 / HLO8).